Here is a 216-residue protein sequence, read N- to C-terminus: Nucleoside triphosphate pyrophosphatase (216 aa).

Aspartate 86 functions as the Proton acceptor in the catalytic mechanism.

Belongs to the Maf family. Requires a divalent metal cation as cofactor.

Its subcellular location is the cytoplasm. It carries out the reaction a ribonucleoside 5'-triphosphate + H2O = a ribonucleoside 5'-phosphate + diphosphate + H(+). The enzyme catalyses a 2'-deoxyribonucleoside 5'-triphosphate + H2O = a 2'-deoxyribonucleoside 5'-phosphate + diphosphate + H(+). Its function is as follows. Nucleoside triphosphate pyrophosphatase. May have a dual role in cell division arrest and in preventing the incorporation of modified nucleotides into cellular nucleic acids. The sequence is that of Nucleoside triphosphate pyrophosphatase from Dictyostelium discoideum (Social amoeba).